We begin with the raw amino-acid sequence, 79 residues long: MORN repeat-containing protein 2 (79 aa).

2 MORN repeats span residues Tyr15–Lys37 and Tyr38–Glu60.

The chain is MORN repeat-containing protein 2 (MORN2) from Bos taurus (Bovine).